Consider the following 140-residue polypeptide: MKFAAVVVLAAAAAAVSAETNAQRMARGLPPKAPIRRHGTPADTEKRSHPSSTGGGQCNTGPIQCCNTVATSGSQSGVDELLTLLGLSVPVGTQVGASCSPISAVGTGSGAQCSGQTVCCEQNEWNGLVNIGCMPINLNA.

Positions 1 to 18 (MKFAAVVVLAAAAAAVSA) are cleaved as a signal peptide. A disordered region spans residues 22 to 60 (AQRMARGLPPKAPIRRHGTPADTEKRSHPSSTGGGQCNT). Intrachain disulfides connect cysteine 58–cysteine 119, cysteine 65–cysteine 113, cysteine 66–cysteine 99, and cysteine 120–cysteine 133.

This sequence belongs to the fungal hydrophobin family. In terms of assembly, self-assembles to form functional amyloid fibrils called rodlets. Self-assembly into fibrillar rodlets occurs spontaneously at hydrophobic:hydrophilic interfaces and the rodlets further associate laterally to form amphipathic monolayers.

It localises to the secreted. The protein resides in the cell wall. Its function is as follows. Aerial growth, conidiation, and dispersal of filamentous fungi in the environment rely upon a capability of their secreting small amphipathic proteins called hydrophobins (HPBs) with low sequence identity. Class I can self-assemble into an outermost layer of rodlet bundles on aerial cell surfaces, conferring cellular hydrophobicity that supports fungal growth, development and dispersal; whereas Class II form highly ordered films at water-air interfaces through intermolecular interactions but contribute nothing to the rodlet structure. The polypeptide is Class I hydrophobin 1 (Pisolithus tinctorius (Dead man's foot)).